A 564-amino-acid chain; its full sequence is Alpha-farnesene synthase (564 aa).

D313, D317, T464, and E468 together coordinate Mg(2+). Residues 313 to 317 (DDVYD) carry the DDXXD motif motif.

Belongs to the terpene synthase family. The cofactor is Mg(2+).

It carries out the reaction (2E,6E)-farnesyl diphosphate = (3E,6E)-alpha-farnesene + diphosphate. In terms of biological role, catalyzes the cyclization of farnesyl diphosphate to (E,E)-alpha-farnesene. In Ricinus communis (Castor bean), this protein is Alpha-farnesene synthase (TPS7).